A 187-amino-acid polypeptide reads, in one-letter code: Calcium and integrin-binding family member 2 (187 aa).

EF-hand domains are found at residues 66-101 (KENP…LSEM), 103-138 (PREL…LTKE), and 144-179 (EVNL…APDF). The Ca(2+) site is built by D157, D159, D161, K163, and D168.

In terms of assembly, monomer. Homodimer. As to expression, enriched in central and striolar hair cells.

The protein localises to the cytoplasm. It localises to the cell projection. It is found in the stereocilium. The protein resides in the photoreceptor inner segment. Its subcellular location is the cilium. The protein localises to the photoreceptor outer segment. It localises to the cell membrane. It is found in the sarcolemma. Functionally, calcium- and integrin-binding protein. Plays a role in intracellular calcium homeostasis. Critical for proper photoreceptor cell maintenance and function. Essential for development, maintenance and function of mechanosensory hair cells. The polypeptide is Calcium and integrin-binding family member 2 (Danio rerio (Zebrafish)).